The chain runs to 86 residues: Sulmotoxin 2 (86 aa).

An N-terminal signal peptide occupies residues Met-1 to Pro-21. 5 disulfide bridges follow: Cys-24-Cys-47, Cys-27-Cys-35, Cys-41-Cys-62, Cys-66-Cys-77, and Cys-78-Cys-83.

This sequence belongs to the three-finger toxin family. Ancestral subfamily. Boigatoxin sub-subfamily. Monomer. In terms of tissue distribution, expressed by the venom gland.

It localises to the secreted. Its function is as follows. Probable neurotoxin. Is not toxic to mice and geckos. The chain is Sulmotoxin 2 from Spilotes sulphureus (Amazon puffing snake).